We begin with the raw amino-acid sequence, 618 residues long: 1-deoxy-D-xylulose-5-phosphate synthase (618 aa).

Residues histidine 70 and 111-113 (GHS) contribute to the thiamine diphosphate site. Aspartate 142 provides a ligand contact to Mg(2+). Residues 143 to 144 (GS), asparagine 171, tyrosine 278, and glutamate 360 each bind thiamine diphosphate. A Mg(2+)-binding site is contributed by asparagine 171.

The protein belongs to the transketolase family. DXPS subfamily. In terms of assembly, homodimer. The cofactor is Mg(2+). It depends on thiamine diphosphate as a cofactor.

It carries out the reaction D-glyceraldehyde 3-phosphate + pyruvate + H(+) = 1-deoxy-D-xylulose 5-phosphate + CO2. It functions in the pathway metabolic intermediate biosynthesis; 1-deoxy-D-xylulose 5-phosphate biosynthesis; 1-deoxy-D-xylulose 5-phosphate from D-glyceraldehyde 3-phosphate and pyruvate: step 1/1. In terms of biological role, catalyzes the acyloin condensation reaction between C atoms 2 and 3 of pyruvate and glyceraldehyde 3-phosphate to yield 1-deoxy-D-xylulose-5-phosphate (DXP). The chain is 1-deoxy-D-xylulose-5-phosphate synthase from Helicobacter pylori (strain J99 / ATCC 700824) (Campylobacter pylori J99).